The following is a 295-amino-acid chain: GTPase Era (295 aa).

An Era-type G domain is found at 5-172 (YCGYAAIIGR…EQAVHQLMPE (168 aa)). Positions 13-20 (GRPNVGKS) are G1. GTP is bound at residue 13 to 20 (GRPNVGKS). Residues 39–43 (QTTRY) are G2. A G3 region spans residues 60-63 (DTPG). Residues 60–64 (DTPGL) and 121–124 (NKVD) each bind GTP. Residues 121-124 (NKVD) form a G4 region. The interval 151-153 (LSA) is G5. One can recognise a KH type-2 domain in the interval 203 to 279 (LGQEIPYSLA…FLQLWVKVKS (77 aa)).

The protein belongs to the TRAFAC class TrmE-Era-EngA-EngB-Septin-like GTPase superfamily. Era GTPase family. As to quaternary structure, monomer.

It is found in the cytoplasm. The protein localises to the cell inner membrane. In terms of biological role, an essential GTPase that binds both GDP and GTP, with rapid nucleotide exchange. Plays a role in 16S rRNA processing and 30S ribosomal subunit biogenesis and possibly also in cell cycle regulation and energy metabolism. In Coxiella burnetii (strain CbuK_Q154) (Coxiella burnetii (strain Q154)), this protein is GTPase Era.